A 507-amino-acid polypeptide reads, in one-letter code: Probable allantoinase (507 aa).

His-105, His-107, Lys-195, His-231, His-294, and Asp-368 together coordinate Zn(2+). Lys-195 is subject to N6-carboxylysine.

The protein belongs to the metallo-dependent hydrolases superfamily. Allantoinase family. As to quaternary structure, homotetramer. It depends on Zn(2+) as a cofactor. In terms of processing, carboxylation allows a single lysine to coordinate two zinc ions.

It catalyses the reaction (S)-allantoin + H2O = allantoate + H(+). Its pathway is nitrogen metabolism; (S)-allantoin degradation; allantoate from (S)-allantoin: step 1/1. Its function is as follows. Catalyzes the conversion of allantoin (5-ureidohydantoin) to allantoate by hydrolytic cleavage of the five-member hydantoin ring. Catalyzes the first step of the ureide allantoin degradation followed by the sequential activity of AAH, UGLYAH and UAH which allows a complete purine breakdown without the intermediate generation of urea. The polypeptide is Probable allantoinase (ALN) (Oryza sativa subsp. japonica (Rice)).